Here is a 448-residue protein sequence, read N- to C-terminus: Probable 3-ketoacyl-CoA thiolase (448 aa).

The Acyl-thioester intermediate role is filled by C110. Catalysis depends on proton acceptor residues H402 and C432.

Belongs to the thiolase-like superfamily. Thiolase family.

It is found in the mitochondrion. It carries out the reaction an acyl-CoA + acetyl-CoA = a 3-oxoacyl-CoA + CoA. Its pathway is lipid metabolism; fatty acid beta-oxidation. In terms of biological role, mitochondrial enzyme that catalyzes reactions of the mitochondrial beta-oxidation pathway. This Caenorhabditis elegans protein is Probable 3-ketoacyl-CoA thiolase.